The following is a 508-amino-acid chain: Hydroxymethylglutaryl-CoA synthase, mitochondrial (508 aa).

The transit peptide at 1–37 (MQRLLAPARRVLQVKRVMQESSLSPAHLLPAAQQRFS) directs the protein to the mitochondrion. An N6-succinyllysine modification is found at K52. Residues E80 and A81 each contribute to the (3S)-3-hydroxy-3-methylglutaryl-CoA site. An N6-acetyllysine; alternate mark is found at K83 and K118. Residues K83 and K118 each carry the N6-succinyllysine; alternate modification. E132 serves as the catalytic Proton donor/acceptor. 3 residues coordinate (3S)-3-hydroxy-3-methylglutaryl-CoA: C166, N204, and T208. Catalysis depends on C166, which acts as the Acyl-thioester intermediate. N6-succinyllysine is present on K221. K243 is subject to N6-acetyllysine. K256 is subject to N6-acetyllysine; alternate. K256 is modified (N6-succinyllysine; alternate). The (3S)-3-hydroxy-3-methylglutaryl-CoA site is built by S258 and H301. Catalysis depends on H301, which acts as the Proton donor/acceptor. Position 306 is an N6-acetyllysine (K306). K310 contacts (3S)-3-hydroxy-3-methylglutaryl-CoA. K310 and K327 each carry N6-acetyllysine; alternate. Residues K310 and K327 each carry the N6-succinyllysine; alternate modification. Position 333 is an N6-succinyllysine (K333). 4 positions are modified to N6-acetyllysine; alternate: K342, K350, K354, and K358. An N6-succinyllysine; alternate mark is found at K342, K350, K354, and K358. (3S)-3-hydroxy-3-methylglutaryl-CoA contacts are provided by N380 and S414. K427 carries the post-translational modification N6-acetyllysine. Phosphoserine is present on S433. K437 carries the N6-acetyllysine modification. S440 carries the post-translational modification Phosphoserine. An N6-acetyllysine; alternate modification is found at K447. K447 bears the N6-succinyllysine; alternate mark. At S456 the chain carries Phosphoserine. Residue K473 is modified to N6-acetyllysine; alternate. N6-succinyllysine; alternate is present on K473. Phosphoserine is present on S477.

It belongs to the thiolase-like superfamily. HMG-CoA synthase family. As to quaternary structure, homodimer. Succinylated. Desuccinylated by SIRT5. Succinylation, at least at Lys-83 and Lys-310, inhibits the enzymatic activity. Liver and kidney.

Its subcellular location is the mitochondrion. It carries out the reaction acetoacetyl-CoA + acetyl-CoA + H2O = (3S)-3-hydroxy-3-methylglutaryl-CoA + CoA + H(+). It functions in the pathway metabolic intermediate biosynthesis; (R)-mevalonate biosynthesis; (R)-mevalonate from acetyl-CoA: step 2/3. Its function is as follows. Catalyzes the first irreversible step in ketogenesis, condensing acetyl-CoA to acetoacetyl-CoA to form HMG-CoA, which is converted by HMG-CoA reductase (HMGCR) into mevalonate. This chain is Hydroxymethylglutaryl-CoA synthase, mitochondrial (Hmgcs2), found in Rattus norvegicus (Rat).